Here is a 380-residue protein sequence, read N- to C-terminus: Small ribosomal subunit protein uS3m (380 aa).

This sequence belongs to the universal ribosomal protein uS3 family.

The protein resides in the mitochondrion. Functionally, essential for mitochondrial protein synthesis and required for the maturation of small ribosomal subunits. The sequence is that of Small ribosomal subunit protein uS3m (VAR1) from Cyberlindnera mrakii (Yeast).